Reading from the N-terminus, the 615-residue chain is Isocitrate dehydrogenase kinase/phosphatase (615 aa).

ATP contacts are provided by residues 325–331 (APGIKGM) and K346. Residue D381 is part of the active site.

Belongs to the AceK family.

It is found in the cytoplasm. The catalysed reaction is L-seryl-[isocitrate dehydrogenase] + ATP = O-phospho-L-seryl-[isocitrate dehydrogenase] + ADP + H(+). Bifunctional enzyme which can phosphorylate or dephosphorylate isocitrate dehydrogenase (IDH) on a specific serine residue. This is a regulatory mechanism which enables bacteria to bypass the Krebs cycle via the glyoxylate shunt in response to the source of carbon. When bacteria are grown on glucose, IDH is fully active and unphosphorylated, but when grown on acetate or ethanol, the activity of IDH declines drastically concomitant with its phosphorylation. This chain is Isocitrate dehydrogenase kinase/phosphatase, found in Albidiferax ferrireducens (strain ATCC BAA-621 / DSM 15236 / T118) (Rhodoferax ferrireducens).